Reading from the N-terminus, the 30-residue chain is Kappa-sparatoxin-Hv1d (30 aa).

3 disulfides stabilise this stretch: cysteine 3–cysteine 17, cysteine 10–cysteine 22, and cysteine 16–cysteine 26.

Expressed by the venom gland.

It localises to the secreted. Inhibitor of voltage-gated potassium channels of the Kv4/KCND family. Blocks calcium channels (Cav). The polypeptide is Kappa-sparatoxin-Hv1d (Heteropoda venatoria (Brown huntsman spider)).